The sequence spans 365 residues: Chorismate synthase (365 aa).

An NADP(+)-binding site is contributed by Arg-48. FMN-binding positions include 125–127 (RGS), Gly-286, 301–305 (KPTPS), and Arg-328.

The protein belongs to the chorismate synthase family. FMNH2 serves as cofactor.

It carries out the reaction 5-O-(1-carboxyvinyl)-3-phosphoshikimate = chorismate + phosphate. It participates in metabolic intermediate biosynthesis; chorismate biosynthesis; chorismate from D-erythrose 4-phosphate and phosphoenolpyruvate: step 7/7. In terms of biological role, catalyzes the anti-1,4-elimination of the C-3 phosphate and the C-6 proR hydrogen from 5-enolpyruvylshikimate-3-phosphate (EPSP) to yield chorismate, which is the branch point compound that serves as the starting substrate for the three terminal pathways of aromatic amino acid biosynthesis. This reaction introduces a second double bond into the aromatic ring system. The chain is Chorismate synthase from Methanosphaera stadtmanae (strain ATCC 43021 / DSM 3091 / JCM 11832 / MCB-3).